A 460-amino-acid chain; its full sequence is MRFEDYPAEPFRIKSVETVKMIDKAAREEVIKKAGYNTFLINSEDVYIDLLTDSGTNAMSDKQWGGLMQGDEAYAGSRNFFHLEETVKEIFGFKHIVPTHQGRGAENILSQIAIKPGQYVPGNMYFTTTRYHQERNGGIFKDIIRDEAHDATLNVPFKGDIDLNKLQKLIDEVGAENIAYVCLAVTVNLAGGQPVSMKNMKAVRELTKKHGIKVFYDATRCVENAYFIKEQEEGYQDKTIKEIVHEMFSYADGCTMSGKKDCLVNIGGFLCMNDEDLFLAAKEIVVVYEGMPSYGGLAGRDMEAMAIGLRESLQYEYIRHRILQVRYLGEKLKEAGVPILEPVGGHAVFLDARRFCPHIPQEEFPAQALAAAIYVECGVRTMERGIISAGRDVKTGENHKPKLETVRVTIPRRVYTYKHMDVVAEGIIKLYKHKEDIKPLEFVYEPKQLRFFTARFGIKK.

Lysine 260 carries the N6-(pyridoxal phosphate)lysine modification.

The protein belongs to the beta-eliminating lyase family. In terms of assembly, homotetramer. Pyridoxal 5'-phosphate serves as cofactor.

The catalysed reaction is L-tyrosine + H2O = phenol + pyruvate + NH4(+). This chain is Tyrosine phenol-lyase, found in Fusobacterium nucleatum subsp. nucleatum (strain ATCC 25586 / DSM 15643 / BCRC 10681 / CIP 101130 / JCM 8532 / KCTC 2640 / LMG 13131 / VPI 4355).